The sequence spans 456 residues: Bifunctional protein GlmU (456 aa).

A pyrophosphorylase region spans residues 1 to 229 (MLNSAMSVVI…ISETDGVNNR (229 aa)). UDP-N-acetyl-alpha-D-glucosamine contacts are provided by residues 11–14 (LAAG), Lys-25, Gln-76, 81–82 (GT), 103–105 (YGD), Gly-140, Glu-154, Asn-169, and Asn-227. Asp-105 provides a ligand contact to Mg(2+). Asn-227 is a binding site for Mg(2+). Residues 230 to 250 (LQLSRLERIYQAEQAEKLLLS) are linker. The segment at 251–456 (GVMLRDPARF…QGWQRPVKKK (206 aa)) is N-acetyltransferase. UDP-N-acetyl-alpha-D-glucosamine-binding residues include Arg-333 and Lys-351. His-363 (proton acceptor) is an active-site residue. UDP-N-acetyl-alpha-D-glucosamine contacts are provided by Tyr-366 and Asn-377. Acetyl-CoA is bound by residues Ala-380, 386–387 (NY), Ser-405, Ala-423, and Arg-440.

The protein in the N-terminal section; belongs to the N-acetylglucosamine-1-phosphate uridyltransferase family. This sequence in the C-terminal section; belongs to the transferase hexapeptide repeat family. As to quaternary structure, homotrimer. It depends on Mg(2+) as a cofactor.

The protein localises to the cytoplasm. The enzyme catalyses alpha-D-glucosamine 1-phosphate + acetyl-CoA = N-acetyl-alpha-D-glucosamine 1-phosphate + CoA + H(+). It catalyses the reaction N-acetyl-alpha-D-glucosamine 1-phosphate + UTP + H(+) = UDP-N-acetyl-alpha-D-glucosamine + diphosphate. Its pathway is nucleotide-sugar biosynthesis; UDP-N-acetyl-alpha-D-glucosamine biosynthesis; N-acetyl-alpha-D-glucosamine 1-phosphate from alpha-D-glucosamine 6-phosphate (route II): step 2/2. The protein operates within nucleotide-sugar biosynthesis; UDP-N-acetyl-alpha-D-glucosamine biosynthesis; UDP-N-acetyl-alpha-D-glucosamine from N-acetyl-alpha-D-glucosamine 1-phosphate: step 1/1. It participates in bacterial outer membrane biogenesis; LPS lipid A biosynthesis. Functionally, catalyzes the last two sequential reactions in the de novo biosynthetic pathway for UDP-N-acetylglucosamine (UDP-GlcNAc). The C-terminal domain catalyzes the transfer of acetyl group from acetyl coenzyme A to glucosamine-1-phosphate (GlcN-1-P) to produce N-acetylglucosamine-1-phosphate (GlcNAc-1-P), which is converted into UDP-GlcNAc by the transfer of uridine 5-monophosphate (from uridine 5-triphosphate), a reaction catalyzed by the N-terminal domain. In Salmonella schwarzengrund (strain CVM19633), this protein is Bifunctional protein GlmU.